Reading from the N-terminus, the 721-residue chain is Exo beta-1,2-glucooligosaccharide sophorohydrolase (non-reducing end) (721 aa).

The N-terminal stretch at methionine 1–alanine 18 is a signal peptide. One can recognise a Glycoamylase-like domain in the interval asparagine 474–proline 708.

As to quaternary structure, monomer.

It is found in the periplasm. It catalyses the reaction [(1-&gt;2)-beta-D-glucosyl](n) + H2O = [(1-&gt;2)-beta-D-glucosyl](n-2) + sophorose. Its function is as follows. Catalyzes the hydrolysis of linear beta-1,2-glucan and beta-1,2-glucooligosaccharides with degrees of polymerization (DPs) greater than or equal to 4, to produce sophorose. The best substrates are tetra- and pentasaccharides. Acts as an exo-type enzyme that releases sophorose from the non-reducing end of the substrate. It cannot hydrolyze cyclic beta-1,2-glucans. The chain is Exo beta-1,2-glucooligosaccharide sophorohydrolase (non-reducing end) from Parabacteroides distasonis (strain ATCC 8503 / DSM 20701 / CIP 104284 / JCM 5825 / NCTC 11152).